Here is a 335-residue protein sequence, read N- to C-terminus: Holliday junction branch migration complex subunit RuvB (335 aa).

A large ATPase domain (RuvB-L) region spans residues Met-1 to Tyr-181. ATP is bound by residues Leu-20, Arg-21, Gly-62, Lys-65, Thr-66, Thr-67, Glu-128–Phe-130, Arg-171, Tyr-181, and Arg-218. Thr-66 contacts Mg(2+). Positions Thr-182–Gly-252 are small ATPAse domain (RuvB-S). The interval Glu-255–Phe-335 is head domain (RuvB-H). 2 residues coordinate DNA: Arg-309 and Arg-314.

It belongs to the RuvB family. As to quaternary structure, homohexamer. Forms an RuvA(8)-RuvB(12)-Holliday junction (HJ) complex. HJ DNA is sandwiched between 2 RuvA tetramers; dsDNA enters through RuvA and exits via RuvB. An RuvB hexamer assembles on each DNA strand where it exits the tetramer. Each RuvB hexamer is contacted by two RuvA subunits (via domain III) on 2 adjacent RuvB subunits; this complex drives branch migration. In the full resolvosome a probable DNA-RuvA(4)-RuvB(12)-RuvC(2) complex forms which resolves the HJ.

It localises to the cytoplasm. It catalyses the reaction ATP + H2O = ADP + phosphate + H(+). Its function is as follows. The RuvA-RuvB-RuvC complex processes Holliday junction (HJ) DNA during genetic recombination and DNA repair, while the RuvA-RuvB complex plays an important role in the rescue of blocked DNA replication forks via replication fork reversal (RFR). RuvA specifically binds to HJ cruciform DNA, conferring on it an open structure. The RuvB hexamer acts as an ATP-dependent pump, pulling dsDNA into and through the RuvAB complex. RuvB forms 2 homohexamers on either side of HJ DNA bound by 1 or 2 RuvA tetramers; 4 subunits per hexamer contact DNA at a time. Coordinated motions by a converter formed by DNA-disengaged RuvB subunits stimulates ATP hydrolysis and nucleotide exchange. Immobilization of the converter enables RuvB to convert the ATP-contained energy into a lever motion, pulling 2 nucleotides of DNA out of the RuvA tetramer per ATP hydrolyzed, thus driving DNA branch migration. The RuvB motors rotate together with the DNA substrate, which together with the progressing nucleotide cycle form the mechanistic basis for DNA recombination by continuous HJ branch migration. Branch migration allows RuvC to scan DNA until it finds its consensus sequence, where it cleaves and resolves cruciform DNA. This chain is Holliday junction branch migration complex subunit RuvB, found in Nitratiruptor sp. (strain SB155-2).